Consider the following 255-residue polypeptide: 3-dehydroquinate dehydratase (255 aa).

3-dehydroquinate is bound by residues 47 to 49 (EWR) and arginine 83. The active-site Proton donor/acceptor is histidine 144. The Schiff-base intermediate with substrate role is filled by lysine 171. The 3-dehydroquinate site is built by arginine 214, serine 233, and glutamine 237.

Belongs to the type-I 3-dehydroquinase family. In terms of assembly, homodimer.

The enzyme catalyses 3-dehydroquinate = 3-dehydroshikimate + H2O. Its pathway is metabolic intermediate biosynthesis; chorismate biosynthesis; chorismate from D-erythrose 4-phosphate and phosphoenolpyruvate: step 3/7. Functionally, involved in the third step of the chorismate pathway, which leads to the biosynthesis of aromatic amino acids. Catalyzes the cis-dehydration of 3-dehydroquinate (DHQ) and introduces the first double bond of the aromatic ring to yield 3-dehydroshikimate. This chain is 3-dehydroquinate dehydratase, found in Alkaliphilus oremlandii (strain OhILAs) (Clostridium oremlandii (strain OhILAs)).